The primary structure comprises 245 residues: 1-(5-phosphoribosyl)-5-[(5-phosphoribosylamino)methylideneamino] imidazole-4-carboxamide isomerase (245 aa).

Residue Asp-7 is the Proton acceptor of the active site. The active-site Proton donor is Asp-129.

The protein belongs to the HisA/HisF family.

Its subcellular location is the cytoplasm. It catalyses the reaction 1-(5-phospho-beta-D-ribosyl)-5-[(5-phospho-beta-D-ribosylamino)methylideneamino]imidazole-4-carboxamide = 5-[(5-phospho-1-deoxy-D-ribulos-1-ylimino)methylamino]-1-(5-phospho-beta-D-ribosyl)imidazole-4-carboxamide. It participates in amino-acid biosynthesis; L-histidine biosynthesis; L-histidine from 5-phospho-alpha-D-ribose 1-diphosphate: step 4/9. In Proteus mirabilis (strain HI4320), this protein is 1-(5-phosphoribosyl)-5-[(5-phosphoribosylamino)methylideneamino] imidazole-4-carboxamide isomerase.